A 331-amino-acid polypeptide reads, in one-letter code: L-lactate dehydrogenase A chain (331 aa).

NAD(+)-binding positions include 29-57 (GMVG…MEDK) and R98. The substrate site is built by R105, N137, and R168. N137 contacts NAD(+). H192 (proton acceptor) is an active-site residue. T247 provides a ligand contact to substrate.

Belongs to the LDH/MDH superfamily. LDH family. Homotetramer.

Its subcellular location is the cytoplasm. It carries out the reaction (S)-lactate + NAD(+) = pyruvate + NADH + H(+). It functions in the pathway fermentation; pyruvate fermentation to lactate; (S)-lactate from pyruvate: step 1/1. Its function is as follows. Interconverts simultaneously and stereospecifically pyruvate and lactate with concomitant interconversion of NADH and NAD(+). This Harpagifer antarcticus (Antarctic spiny plunderfish) protein is L-lactate dehydrogenase A chain (ldha).